The following is an 85-amino-acid chain: Conotoxin Cap15b (85 aa).

The N-terminal stretch at 1–23 (MEKLTFLILVATVLLTIHVLVQS) is a signal peptide. A propeptide spanning residues 24–49 (DGDKHLKRRPKQYATKRLSALMRGHR) is cleaved from the precursor. Position 50 is a pyrrolidone carboxylic acid (Q50).

This sequence belongs to the conotoxin O2 superfamily. Post-translationally, contains 4 disulfide bonds. As to expression, expressed by the venom duct.

The protein resides in the secreted. In Conus capitaneus (Captain cone), this protein is Conotoxin Cap15b.